The chain runs to 563 residues: uncharacterized protein (563 aa).

The Cytoplasmic portion of the chain corresponds to Met1–Gly13. A helical membrane pass occupies residues Ile14–Phe34. Topologically, residues Pro35 to Thr528 are lumenal. N-linked (GlcNAc...) asparagine glycans are attached at residues Asn43, Asn112, Asn133, Asn188, Asn265, Asn295, Asn315, and Asn502. A helical transmembrane segment spans residues Ile529–Ile549. The Cytoplasmic portion of the chain corresponds to Val550–Ser563.

The protein belongs to the CD36 family.

The protein resides in the membrane. This is an uncharacterized protein from Caenorhabditis elegans.